The primary structure comprises 180 residues: Large ribosomal subunit protein uL5 (180 aa).

The protein belongs to the universal ribosomal protein uL5 family. In terms of assembly, part of the 50S ribosomal subunit; part of the 5S rRNA/L5/L18/L25 subcomplex. Contacts the 5S rRNA and the P site tRNA. Forms a bridge to the 30S subunit in the 70S ribosome.

This is one of the proteins that bind and probably mediate the attachment of the 5S RNA into the large ribosomal subunit, where it forms part of the central protuberance. In the 70S ribosome it contacts protein S13 of the 30S subunit (bridge B1b), connecting the 2 subunits; this bridge is implicated in subunit movement. Contacts the P site tRNA; the 5S rRNA and some of its associated proteins might help stabilize positioning of ribosome-bound tRNAs. This chain is Large ribosomal subunit protein uL5, found in Lactobacillus delbrueckii subsp. bulgaricus (strain ATCC 11842 / DSM 20081 / BCRC 10696 / JCM 1002 / NBRC 13953 / NCIMB 11778 / NCTC 12712 / WDCM 00102 / Lb 14).